Consider the following 116-residue polypeptide: Ribosome-binding factor A (116 aa).

Belongs to the RbfA family. As to quaternary structure, monomer. Binds 30S ribosomal subunits, but not 50S ribosomal subunits or 70S ribosomes.

Its subcellular location is the cytoplasm. In terms of biological role, one of several proteins that assist in the late maturation steps of the functional core of the 30S ribosomal subunit. Associates with free 30S ribosomal subunits (but not with 30S subunits that are part of 70S ribosomes or polysomes). Required for efficient processing of 16S rRNA. May interact with the 5'-terminal helix region of 16S rRNA. The chain is Ribosome-binding factor A from Streptococcus sanguinis (strain SK36).